The following is a 268-amino-acid chain: 4-diphosphocytidyl-2-C-methyl-D-erythritol kinase (268 aa).

Lys-9 is an active-site residue. 88–98 (PPGAGLGGGSS) contacts ATP. Asp-130 is a catalytic residue.

This sequence belongs to the GHMP kinase family. IspE subfamily.

It catalyses the reaction 4-CDP-2-C-methyl-D-erythritol + ATP = 4-CDP-2-C-methyl-D-erythritol 2-phosphate + ADP + H(+). Its pathway is isoprenoid biosynthesis; isopentenyl diphosphate biosynthesis via DXP pathway; isopentenyl diphosphate from 1-deoxy-D-xylulose 5-phosphate: step 3/6. Catalyzes the phosphorylation of the position 2 hydroxy group of 4-diphosphocytidyl-2C-methyl-D-erythritol. The chain is 4-diphosphocytidyl-2-C-methyl-D-erythritol kinase from Aquifex aeolicus (strain VF5).